Here is a 205-residue protein sequence, read N- to C-terminus: Imidazole glycerol phosphate synthase subunit HisH (205 aa).

Positions 3 to 205 (KIGLIDYGMG…LLRRWLSNIQ (203 aa)) constitute a Glutamine amidotransferase type-1 domain. C81 serves as the catalytic Nucleophile. Active-site residues include H185 and E187.

In terms of assembly, heterodimer of HisH and HisF.

The protein localises to the cytoplasm. The enzyme catalyses 5-[(5-phospho-1-deoxy-D-ribulos-1-ylimino)methylamino]-1-(5-phospho-beta-D-ribosyl)imidazole-4-carboxamide + L-glutamine = D-erythro-1-(imidazol-4-yl)glycerol 3-phosphate + 5-amino-1-(5-phospho-beta-D-ribosyl)imidazole-4-carboxamide + L-glutamate + H(+). The catalysed reaction is L-glutamine + H2O = L-glutamate + NH4(+). It participates in amino-acid biosynthesis; L-histidine biosynthesis; L-histidine from 5-phospho-alpha-D-ribose 1-diphosphate: step 5/9. Its function is as follows. IGPS catalyzes the conversion of PRFAR and glutamine to IGP, AICAR and glutamate. The HisH subunit catalyzes the hydrolysis of glutamine to glutamate and ammonia as part of the synthesis of IGP and AICAR. The resulting ammonia molecule is channeled to the active site of HisF. This is Imidazole glycerol phosphate synthase subunit HisH from Prochlorococcus marinus (strain MIT 9312).